Consider the following 445-residue polypeptide: Argininosuccinate synthase (445 aa).

ATP contacts are provided by residues 17–25 and A43; that span reads AFSGGLDTS. Y99 serves as a coordination point for L-citrulline. ATP contacts are provided by G129 and T131. L-aspartate is bound by residues T131, N135, and D136. L-citrulline is bound at residue N135. D136 provides a ligand contact to ATP. Residues R139 and S192 each contribute to the L-citrulline site. D194 is a binding site for ATP. L-citrulline-binding residues include T201, E203, and E280.

This sequence belongs to the argininosuccinate synthase family. Type 2 subfamily. In terms of assembly, homotetramer.

Its subcellular location is the cytoplasm. The catalysed reaction is L-citrulline + L-aspartate + ATP = 2-(N(omega)-L-arginino)succinate + AMP + diphosphate + H(+). It participates in amino-acid biosynthesis; L-arginine biosynthesis; L-arginine from L-ornithine and carbamoyl phosphate: step 2/3. In Burkholderia ambifaria (strain ATCC BAA-244 / DSM 16087 / CCUG 44356 / LMG 19182 / AMMD) (Burkholderia cepacia (strain AMMD)), this protein is Argininosuccinate synthase.